An 89-amino-acid polypeptide reads, in one-letter code: Small ribosomal subunit protein uS15 (89 aa).

It belongs to the universal ribosomal protein uS15 family. In terms of assembly, part of the 30S ribosomal subunit. Forms a bridge to the 50S subunit in the 70S ribosome, contacting the 23S rRNA.

In terms of biological role, one of the primary rRNA binding proteins, it binds directly to 16S rRNA where it helps nucleate assembly of the platform of the 30S subunit by binding and bridging several RNA helices of the 16S rRNA. Functionally, forms an intersubunit bridge (bridge B4) with the 23S rRNA of the 50S subunit in the ribosome. The protein is Small ribosomal subunit protein uS15 of Rhodococcus erythropolis (strain PR4 / NBRC 100887).